A 363-amino-acid chain; its full sequence is Fructose-bisphosphate aldolase (363 aa).

Positions 56 and 147 each coordinate substrate. Catalysis depends on glutamate 188, which acts as the Proton acceptor. Lysine 230 serves as the catalytic Schiff-base intermediate with dihydroxyacetone-P.

It belongs to the class I fructose-bisphosphate aldolase family.

It catalyses the reaction beta-D-fructose 1,6-bisphosphate = D-glyceraldehyde 3-phosphate + dihydroxyacetone phosphate. It functions in the pathway carbohydrate degradation; glycolysis; D-glyceraldehyde 3-phosphate and glycerone phosphate from D-glucose: step 4/4. The polypeptide is Fructose-bisphosphate aldolase (Schistosoma mansoni (Blood fluke)).